The primary structure comprises 144 residues: Ferredoxin-thioredoxin reductase catalytic chain, chloroplastic (144 aa).

The transit peptide at 1–31 (MTTQASTFAVAVPSVATPFRRHRNPFVVRAQ) directs the protein to the chloroplast. Cys83 is a [4Fe-4S] cluster binding site. Cys85 functions as the Nucleophile in the catalytic mechanism. A disulfide bridge links Cys85 with Cys115. [4Fe-4S] cluster contacts are provided by Cys102, Cys104, and Cys113.

This sequence belongs to the ferredoxin thioredoxin reductase beta subunit family. Heterodimer of subunit A (variable subunit) and subunit B (catalytic subunit). Heterodimeric FTR forms a complex with ferredoxin and thioredoxin. The cofactor is [4Fe-4S] cluster.

It is found in the plastid. Its subcellular location is the chloroplast. It catalyses the reaction [thioredoxin]-disulfide + 2 reduced [2Fe-2S]-[ferredoxin] + 2 H(+) = [thioredoxin]-dithiol + 2 oxidized [2Fe-2S]-[ferredoxin]. In terms of biological role, catalytic subunit of the ferredoxin-thioredoxin reductase (FTR), which catalyzes the two-electron reduction of thioredoxins by the electrons provided by reduced ferredoxin. In Glycine max (Soybean), this protein is Ferredoxin-thioredoxin reductase catalytic chain, chloroplastic (FTRC).